The chain runs to 187 residues: Threonylcarbamoyl-AMP synthase (187 aa).

One can recognise a YrdC-like domain in the interval 3–187; it reads QVTPSQISGI…IQTGHIFRQG (185 aa).

The protein belongs to the SUA5 family. TsaC subfamily.

It localises to the cytoplasm. The catalysed reaction is L-threonine + hydrogencarbonate + ATP = L-threonylcarbamoyladenylate + diphosphate + H2O. Its function is as follows. Required for the formation of a threonylcarbamoyl group on adenosine at position 37 (t(6)A37) in tRNAs that read codons beginning with adenine. Catalyzes the conversion of L-threonine, HCO(3)(-)/CO(2) and ATP to give threonylcarbamoyl-AMP (TC-AMP) as the acyladenylate intermediate, with the release of diphosphate. The protein is Threonylcarbamoyl-AMP synthase of Shewanella amazonensis (strain ATCC BAA-1098 / SB2B).